The chain runs to 99 residues: uncharacterized protein (99 aa).

This is an uncharacterized protein from Micromonospora olivasterospora.